The chain runs to 130 residues: UPF0102 protein RPA0323 (130 aa).

Belongs to the UPF0102 family.

The sequence is that of UPF0102 protein RPA0323 from Rhodopseudomonas palustris (strain ATCC BAA-98 / CGA009).